We begin with the raw amino-acid sequence, 503 residues long: MEEFQGYFELDRSRQHDFLYPLLFREYIYALAHDHGLKKSILFENAGYDNKSSSIIVKRLITRMYQQNPLIFSANDSIQNPFFGQNKNFYSQIISEGFAVIVEIPFSLRLVSSLERKEIAKSHKLRAIHSIFPFLEDKFSHLDYVSDVLIPYHIHLEILVQTLRYWVNDASSLHLLRFFLHEYWNSLITQKNHITIFSKGNPRLFLFLYNSHICEYEYFFLFLRNQSSHLRSTSSGIFFERIYFYVKIEHFVKVFYDNDFQCILWFFKDPFMHYVRYQGKSILASKDTPLLMKKWKYYLVNLWQYHFYAWFQPGRIDINQLCKYSLYFLGYRSSVRLNPSVVRSQMLENSFLINNAMKKFETIVPIIPLIGSLSKANFCDTLGHPISKPTRADSSDSDIIDRFLRISRNLSHYHSGSSKKKSLYRVKYILRLSCVKTLARKHKKTVRTFLKRLGSEFLEEFLTEEEVVLSLIFPRTYSTSRRLYRGRIWYLDITSINDLVNYE.

Belongs to the intron maturase 2 family. MatK subfamily.

It is found in the plastid. It localises to the chloroplast. Its function is as follows. Usually encoded in the trnK tRNA gene intron. Probably assists in splicing its own and other chloroplast group II introns. The sequence is that of Maturase K from Eucalyptus globulus subsp. globulus (Tasmanian blue gum).